Consider the following 353-residue polypeptide: DNA polymerase IV (353 aa).

Positions Ile6–Gly187 constitute a UmuC domain. Mg(2+) is bound by residues Asp10 and Asp105. Glu106 is a catalytic residue.

It belongs to the DNA polymerase type-Y family. Monomer. Requires Mg(2+) as cofactor.

It localises to the cytoplasm. It carries out the reaction DNA(n) + a 2'-deoxyribonucleoside 5'-triphosphate = DNA(n+1) + diphosphate. Functionally, poorly processive, error-prone DNA polymerase involved in untargeted mutagenesis. Copies undamaged DNA at stalled replication forks, which arise in vivo from mismatched or misaligned primer ends. These misaligned primers can be extended by PolIV. Exhibits no 3'-5' exonuclease (proofreading) activity. May be involved in translesional synthesis, in conjunction with the beta clamp from PolIII. The chain is DNA polymerase IV from Pseudomonas syringae pv. tomato (strain ATCC BAA-871 / DC3000).